The sequence spans 80 residues: Diphthamide biosynthesis protein 3 (80 aa).

A DPH-type MB domain is found at 4–60 (FHDEVEIEDFEFDEEKDVYHYPCPCGDRFEIPREMLEMGEDVAQCPSCSLLIRVIYD). Fe cation is bound by residues Cys26, Cys28, Cys48, and Cys51.

It belongs to the DPH3 family. As to quaternary structure, component of the 2-(3-amino-3-carboxypropyl)histidine synthase complex composed of dph-1, dph-2, dph-3 and a NADH-dependent reductase. Fe(2+) is required as a cofactor.

The catalysed reaction is [3Fe-4S](1+)-[protein] + Fe(2+)-[Dph3] = [3Fe-4S](0)-[protein] + Fe(3+)-[Dph3]. The enzyme catalyses 2 [3Fe-4S](0)-[protein] + 2 Fe(2+)-[Dph3] + NADH = 2 [4Fe-4S](1+)-[protein] + 2 [Dph3] + NAD(+) + H(+). It functions in the pathway protein modification; peptidyl-diphthamide biosynthesis. Its function is as follows. Required for the first step of diphthamide biosynthesis, a post-translational modification of histidine which occurs in elongation factor 2. Dph-1 and dph-2 transfer a 3-amino-3-carboxypropyl (ACP) group from S-adenosyl-L-methionine (SAM) to a histidine residue, the reaction is assisted by a reduction system comprising dph-3 and a NADH-dependent reductase. Acts as an electron donor to reduce the Fe-S cluster in dph1-dph2 keeping the [4Fe-4S] clusters in the active and reduced state. Restores iron to dph-1-dph-2 iron-sulfur clusters which have degraded from [4Fe-4S] to [3Fe-4S] by donating an iron atom to reform [4Fe-4S] clusters, in a manner dependent on the presence of elongation factor 2 and SAM. Associates with the elongator complex and is required for tRNA Wobble base modifications mediated by the elongator complex. The elongator complex is required for multiple tRNA modifications, including mcm5U (5-methoxycarbonylmethyl uridine), mcm5s 2U (5-methoxycarbonylmethyl-2-thiouridine), and ncm5U (5-carbamoylmethyl uridine). In Caenorhabditis elegans, this protein is Diphthamide biosynthesis protein 3.